The primary structure comprises 126 residues: MLIGVGTDIVQIPRIEKILNIYQELFAKKILALKELKQFTLLNKTNHATFLAKRFSAKEAVSKAFGVGIGRGINFKDITILNDNLGKPTVEISSHYTNKLAPFNIHLSLSDDYPICIAFAIIESNC.

The Mg(2+) site is built by D8 and E59.

This sequence belongs to the P-Pant transferase superfamily. AcpS family. Mg(2+) is required as a cofactor.

It localises to the cytoplasm. The enzyme catalyses apo-[ACP] + CoA = holo-[ACP] + adenosine 3',5'-bisphosphate + H(+). Its function is as follows. Transfers the 4'-phosphopantetheine moiety from coenzyme A to a Ser of acyl-carrier-protein. This is Holo-[acyl-carrier-protein] synthase from Rickettsia prowazekii (strain Madrid E).